The sequence spans 260 residues: MPKSRRAVSLSVLIGAVIAALAGALIAVTVPARPNRPEADREALWKIVHDRCEFGYRRTGAYAPCTFVDEQSGTALYKADFDPYQFLLIPLARITGIEDPALRESAGRNYLYDAWAARFLVTARLNNSLPESDVVLTINPKNARTQDQLHIHISCSSPTTSAALRNVDTSEYVGWKQLPIDLGGRRFQGLAVDTKAFESRNLFRDIYLKVTADGKKMENASIAVANVAQDQFLLLLAEGTEDQPVAAETLQDHDCSITKS.

The helical transmembrane segment at Leu-10 to Val-30 threads the bilayer.

Belongs to the Cdh family.

Its subcellular location is the cell membrane. The enzyme catalyses a CDP-1,2-diacyl-sn-glycerol + H2O = a 1,2-diacyl-sn-glycero-3-phosphate + CMP + 2 H(+). Its pathway is phospholipid metabolism; CDP-diacylglycerol degradation; phosphatidate from CDP-diacylglycerol: step 1/1. This Mycobacterium bovis (strain ATCC BAA-935 / AF2122/97) protein is Probable CDP-diacylglycerol pyrophosphatase (cdh).